The sequence spans 171 residues: Macro domain-containing protein RSc0334 (171 aa).

Residues 1-171 (MPIPTVTLRA…LYETALNEAR (171 aa)) form the Macro domain.

The protein belongs to the MacroD-type family.

In Ralstonia nicotianae (strain ATCC BAA-1114 / GMI1000) (Ralstonia solanacearum), this protein is Macro domain-containing protein RSc0334.